The primary structure comprises 215 residues: Probable phosphoglycerate mutase GpmB (215 aa).

Substrate contacts are provided by residues 8 to 15 (RHGETQWN), 21 to 22 (QG), Arg-58, Arg-60, 82 to 85 (ELNM), 104 to 105 (RR), and 151 to 152 (GI). His-9 functions as the Tele-phosphohistidine intermediate in the catalytic mechanism. Glu-82 serves as the catalytic Proton donor/acceptor.

It belongs to the phosphoglycerate mutase family. GpmB subfamily.

It catalyses the reaction (2R)-2-phosphoglycerate = (2R)-3-phosphoglycerate. Its pathway is carbohydrate degradation; glycolysis; pyruvate from D-glyceraldehyde 3-phosphate: step 3/5. In Escherichia coli O9:H4 (strain HS), this protein is Probable phosphoglycerate mutase GpmB.